The following is a 121-amino-acid chain: Putative SNURF-like protein (121 aa).

It belongs to the SNURF family.

The polypeptide is Putative SNURF-like protein (SNURFL) (Homo sapiens (Human)).